Consider the following 275-residue polypeptide: uncharacterized protein (275 aa).

Residues 171–268 (KMVCEFLEEH…GLTPKQYMKI (98 aa)) enclose the HTH araC/xylS-type domain. 2 DNA-binding regions (H-T-H motif) span residues 188–209 (NDLS…TKQK) and 235–258 (PIDA…KRQV).

This is an uncharacterized protein from Bacillus subtilis (strain 168).